The following is a 191-amino-acid chain: Protein YceI (191 aa).

Positions 1 to 22 (MKKNLLGFTFASLLFTTGSAVA) are cleaved as a signal peptide.

Belongs to the UPF0312 family. Type 1 subfamily.

It is found in the periplasm. This Salmonella agona (strain SL483) protein is Protein YceI.